The sequence spans 86 residues: Omega-theraphotoxin-Hhn1f 4 (86 aa).

A signal peptide spans 1–21 (MKSIVFVALFGLALLAVVCSA). The propeptide occupies 22–50 (SEDAHKELLKEVVRAMVVDKTDAVQAGER). 3 cysteine pairs are disulfide-bonded: C52-C66, C59-C71, and C65-C78.

This sequence belongs to the neurotoxin 10 (Hwtx-1) family. 17 (Hntx-9) subfamily. As to expression, expressed by the venom gland.

It is found in the secreted. Its function is as follows. Ion channel inhibitor. The sequence is that of Omega-theraphotoxin-Hhn1f 4 from Cyriopagopus hainanus (Chinese bird spider).